The chain runs to 191 residues: General negative regulator of transcription subunit 2 (191 aa).

It belongs to the CNOT2/3/5 family. Forms a NOT protein complex that comprises NOT1, NOT2, NOT3, NOT4 and NOT5. Subunit of the 1.0 MDa CCR4-NOT core complex that contains CCR4, CAF1, NOT1, NOT2, NOT3, NOT4, NOT5, CAF40 and CAF130. In the complex interacts with NOT1 and NOT5. The core complex probably is part of a less characterized 1.9 MDa CCR4-NOT complex.

It is found in the cytoplasm. The protein resides in the nucleus. Acts as a component of the CCR4-NOT core complex, which in the nucleus seems to be a general transcription factor, and in the cytoplasm the major mRNA deadenylase involved in mRNA turnover. NOT2 is required for the integrity of the complex. The NOT protein subcomplex negatively regulates the basal and activated transcription of many genes. Preferentially affects TC-type TATA element-dependent transcription. Could directly or indirectly inhibit component(s) of the general transcription machinery. In Saccharomyces cerevisiae (strain ATCC 204508 / S288c) (Baker's yeast), this protein is General negative regulator of transcription subunit 2 (CDC36).